The following is a 26-amino-acid chain: uncharacterized protein (26 aa).

This is an uncharacterized protein from Archaeoglobus fulgidus (strain ATCC 49558 / DSM 4304 / JCM 9628 / NBRC 100126 / VC-16).